The following is a 288-amino-acid chain: Dichloromethane dehalogenase (288 aa).

The GST N-terminal domain maps to 12–94; that stretch reads KTLRLLYHPA…YVNEKFDGAG (83 aa). In terms of domain architecture, GST C-terminal spans 100–252; sequence GTQERAQINQ…ASMFKRKTAV (153 aa).

The protein belongs to the GST superfamily. Homohexamer.

It is found in the cytoplasm. It catalyses the reaction dichloromethane + H2O = formaldehyde + 2 chloride + 2 H(+). It functions in the pathway xenobiotic degradation; dichloromethane degradation. This Methylorubrum extorquens (strain DSM 6343 / CIP 106787 / DM4) (Methylobacterium extorquens) protein is Dichloromethane dehalogenase (dcmA).